We begin with the raw amino-acid sequence, 502 residues long: Maturase K (502 aa).

Belongs to the intron maturase 2 family. MatK subfamily.

It localises to the plastid. The protein resides in the chloroplast. Usually encoded in the trnK tRNA gene intron. Probably assists in splicing its own and other chloroplast group II introns. The protein is Maturase K of Arabis blepharophylla (Coast rock-cress).